The chain runs to 191 residues: MASAFEMNRLAFIIFVYVIAAIPFGRCISACFGVDICTRGSGNIGATNMTRVMGLGFGSVVFMLDFLKAAAPVFLAVQCCSDVFASTVGFVAVFAHVFSVYMAFKGGKGVAPMMGVYFVLVLPVFIVAVCTWGIFFVLFRQPFISSLIACFIGAVYSYALLELYVFLPILAGTVLIFIRHTSNVREFLQAR.

5 helical membrane-spanning segments follow: residues 10–30 (LAFI…CISA), 57–77 (FGSV…FLAV), 84–104 (FAST…YMAF), 118–138 (FVLV…FFVL), and 158–178 (YALL…LIFI).

It belongs to the PlsY family. Probably interacts with PlsX.

The protein resides in the cell inner membrane. It catalyses the reaction an acyl phosphate + sn-glycerol 3-phosphate = a 1-acyl-sn-glycero-3-phosphate + phosphate. Its pathway is lipid metabolism; phospholipid metabolism. Functionally, catalyzes the transfer of an acyl group from acyl-phosphate (acyl-PO(4)) to glycerol-3-phosphate (G3P) to form lysophosphatidic acid (LPA). This enzyme utilizes acyl-phosphate as fatty acyl donor, but not acyl-CoA or acyl-ACP. The polypeptide is Glycerol-3-phosphate acyltransferase (Neorickettsia sennetsu (strain ATCC VR-367 / Miyayama) (Ehrlichia sennetsu)).